A 264-amino-acid polypeptide reads, in one-letter code: uncharacterized protein (264 aa).

The tract at residues 57 to 264 (RPPASPCPPR…VYPHPHLTAT (208 aa)) is disordered. Basic residues predominate over residues 140-153 (GKARRSPGRRRHPH). The span at 154 to 165 (SSFPQASSPSSP) shows a compositional bias: low complexity.

This is an uncharacterized protein from Homo sapiens (Human).